Reading from the N-terminus, the 297-residue chain is Myoblast determination protein 1 homolog (297 aa).

Positions 52–76 (KPEEHPHHHGHHHGHPHEEEHVRAP) are disordered. Positions 101–152 (DRRKAATMRERRRLSKVNEAFETLKRCTSTNPNQRLPKVEILRNAIRYIESL) constitute a bHLH domain. Disordered regions lie at residues 171–221 (SGES…GKSS) and 243–297 (CPIL…YQVL). 2 stretches are compositionally biased toward polar residues: residues 174-184 (SDASSPRSNCS) and 258-297 (CSPQ…YQVL).

Efficient DNA binding requires dimerization with another bHLH protein. Seems to form active heterodimers with ITF-2.

The protein localises to the nucleus. Acts as a transcriptional activator that promotes transcription of muscle-specific target genes and plays a role in muscle differentiation. Induces fibroblasts to differentiate into myoblasts. Interacts with and is inhibited by the twist protein. This interaction probably involves the basic domains of both proteins. In Coturnix japonica (Japanese quail), this protein is Myoblast determination protein 1 homolog (MYOD1).